A 1071-amino-acid chain; its full sequence is Exportin-1 (1071 aa).

An Importin N-terminal domain is found at 46–112; it reads AQEVLTHLKE…KKYVVGLIIK (67 aa). HEAT repeat units lie at residues 217–240, 241–277, 354–472, 515–553, 560–597, and 602–639; these read QNAP…PLGY, IFET…VSVS, MLLV…YVDT, RFLV…QYPR, KFLK…KCRR, and VQVG…AVGY. A necessary for interaction with Ran and nuclear export complex formation region spans residues 327-450; sequence CTFLKEHGQL…VREFMKDTDS (124 aa). Ser-391 is modified (phosphoserine). A necessary for interaction with RANBP3 region spans residues 411–481; the sequence is TVLSKVRLLM…TEIIMTKKLQ (71 aa). Lys-446 carries the N6-acetyllysine modification. Thr-448 carries the post-translational modification Phosphothreonine. Ser-450 carries the post-translational modification Phosphoserine. Position 454 is a phosphotyrosine (Tyr-454). Residue Lys-693 is modified to N6-acetyllysine. HEAT repeat units follow at residues 775–813, 885–916, and 917–954; these read NFVP…KLGG, TMRN…SFYQ, and TYFC…NLVE. Phosphoserine is present on residues Ser-966 and Ser-1031. The HEAT 10 repeat unit spans residues 1002–1039; it reads FSLNQDIPAFKEHLRDFLVQIKEFAGEDTSDLFLEERE.

The protein belongs to the exportin family. In terms of assembly, found in a U snRNA export complex with PHAX/RNUXA, NCBP1/CBP80, NCBP2/CBP20, RAN, XPO1 and m7G-capped RNA. Component of a nuclear export receptor complex composed of KPNB1, RAN, SNUPN and XPO1. Found in a trimeric export complex with SNUPN, RAN and XPO1. Found in a nuclear export complex with RANBP3 and RAN. Found in a 60S ribosomal subunit export complex with NMD3, RAN, XPO1. Interacts with DDX3X, NMD3, NUP42, NUP88, NUP214, RANBP3 and TERT. Interacts with NEMF (via its N-terminus). Interacts with the monomeric form of BIRC5/survivin deacetylated at 'Lys-129'. Interacts with DTNBP1 and SERTAD2; the interactions translocate DTNBP1 and SERTAD2 out of the nucleus. Interacts with ATF2. Interacts with SLC35G1 and STIM1. Interacts with DCAF8. Interacts with CPEB3. Interacts with HAX1. Interacts with BOK; translocates to the cytoplasm. Interacts with HSP90AB1. Interacts with LRPPRC; interacts with LRPPRC alone and also when LRPPRC is in complex with EIF4E and with EIF4E sensitivity element (4ESE)-containing mRNAs to form an EIF4E-dependent mRNA export complex.

The protein resides in the cytoplasm. It is found in the nucleus. It localises to the nucleoplasm. The protein localises to the cajal body. Its subcellular location is the nucleolus. Mediates the nuclear export of cellular proteins (cargos) bearing a leucine-rich nuclear export signal (NES) and of RNAs. In the nucleus, in association with RANBP3, binds cooperatively to the NES on its target protein and to the GTPase Ran in its active GTP-bound form. Docking of this complex to the nuclear pore complex (NPC) is mediated through binding to nucleoporins. Upon transit of a nuclear export complex into the cytoplasm, disassembling of the complex and hydrolysis of Ran-GTP to Ran-GDP (induced by RANBP1 and RANGAP1, respectively) cause release of the cargo from the export receptor. The directionality of nuclear export is thought to be conferred by an asymmetric distribution of the GTP- and GDP-bound forms of Ran between the cytoplasm and nucleus. Involved in U3 snoRNA transport from Cajal bodies to nucleoli. Binds to late precursor U3 snoRNA bearing a TMG cap. This chain is Exportin-1 (Xpo1), found in Rattus norvegicus (Rat).